We begin with the raw amino-acid sequence, 206 residues long: Probable GTP-binding protein EngB (206 aa).

An EngB-type G domain is found at 25–198 (SRAEVAFAGR…AVRIEGWLAP (174 aa)). Ser40 and Thr62 together coordinate Mg(2+).

Belongs to the TRAFAC class TrmE-Era-EngA-EngB-Septin-like GTPase superfamily. EngB GTPase family. Requires Mg(2+) as cofactor.

Functionally, necessary for normal cell division and for the maintenance of normal septation. The sequence is that of Probable GTP-binding protein EngB from Thiobacillus denitrificans (strain ATCC 25259 / T1).